Reading from the N-terminus, the 214-residue chain is Small ribosomal subunit protein uS5 (214 aa).

Residues 54–117 (LKYEVVDIKV…RDAKMNIIPV (64 aa)) enclose the S5 DRBM domain.

Belongs to the universal ribosomal protein uS5 family. In terms of assembly, part of the 30S ribosomal subunit. Contacts protein S4.

Its function is as follows. With S4 and S12 plays an important role in translational accuracy. This Saccharolobus solfataricus (strain ATCC 35092 / DSM 1617 / JCM 11322 / P2) (Sulfolobus solfataricus) protein is Small ribosomal subunit protein uS5.